Consider the following 212-residue polypeptide: Ion-translocating oxidoreductase complex subunit G (212 aa).

A helical transmembrane segment spans residues 9–29 (GLLLALFALLCTGLVAVVNQQ). An FMN phosphoryl threonine modification is found at Thr-176.

This sequence belongs to the RnfG family. The complex is composed of six subunits: RnfA, RnfB, RnfC, RnfD, RnfE and RnfG. FMN is required as a cofactor.

It localises to the cell inner membrane. Functionally, part of a membrane-bound complex that couples electron transfer with translocation of ions across the membrane. The polypeptide is Ion-translocating oxidoreductase complex subunit G (Shewanella oneidensis (strain ATCC 700550 / JCM 31522 / CIP 106686 / LMG 19005 / NCIMB 14063 / MR-1)).